The sequence spans 536 residues: CTP synthase (536 aa).

The segment at 1 to 267 is amidoligase domain; the sequence is MSKFVFVTGG…CKETLRCLDL (267 aa). Serine 13 is a CTP binding site. UTP is bound at residue serine 13. ATP is bound by residues 14-19 and aspartate 71; that span reads SIGKGI. Aspartate 71 and glutamate 141 together coordinate Mg(2+). CTP is bound by residues 148–150, 188–193, and lysine 224; these read DIE and KTKPTQ. UTP contacts are provided by residues 188–193 and lysine 224; that span reads KTKPTQ. In terms of domain architecture, Glutamine amidotransferase type-1 spans 292-534; it reads KVALVGKYIE…IKASREKLEQ (243 aa). L-glutamine is bound at residue glycine 354. Cysteine 381 (nucleophile; for glutamine hydrolysis) is an active-site residue. L-glutamine contacts are provided by residues 382 to 385, glutamate 405, and arginine 462; that span reads LGMQ. Catalysis depends on residues histidine 507 and glutamate 509.

The protein belongs to the CTP synthase family. In terms of assembly, homotetramer.

The catalysed reaction is UTP + L-glutamine + ATP + H2O = CTP + L-glutamate + ADP + phosphate + 2 H(+). The enzyme catalyses L-glutamine + H2O = L-glutamate + NH4(+). It catalyses the reaction UTP + NH4(+) + ATP = CTP + ADP + phosphate + 2 H(+). It functions in the pathway pyrimidine metabolism; CTP biosynthesis via de novo pathway; CTP from UDP: step 2/2. With respect to regulation, allosterically activated by GTP, when glutamine is the substrate; GTP has no effect on the reaction when ammonia is the substrate. The allosteric effector GTP functions by stabilizing the protein conformation that binds the tetrahedral intermediate(s) formed during glutamine hydrolysis. Inhibited by the product CTP, via allosteric rather than competitive inhibition. Functionally, catalyzes the ATP-dependent amination of UTP to CTP with either L-glutamine or ammonia as the source of nitrogen. Regulates intracellular CTP levels through interactions with the four ribonucleotide triphosphates. This is CTP synthase from Prochlorococcus marinus (strain MIT 9515).